The chain runs to 161 residues: Protein-export protein SecB (161 aa).

This sequence belongs to the SecB family. In terms of assembly, homotetramer, a dimer of dimers. One homotetramer interacts with 1 SecA dimer.

Its subcellular location is the cytoplasm. Its function is as follows. One of the proteins required for the normal export of preproteins out of the cell cytoplasm. It is a molecular chaperone that binds to a subset of precursor proteins, maintaining them in a translocation-competent state. It also specifically binds to its receptor SecA. In Shewanella pealeana (strain ATCC 700345 / ANG-SQ1), this protein is Protein-export protein SecB.